Consider the following 166-residue polypeptide: Ubiquitin-conjugating enzyme E2 7 (166 aa).

An N-acetylalanine modification is found at A2. One can recognise a UBC core domain in the interval 4 to 164 (QASLLLQKQL…VSRCVRKSQE (161 aa)). C89 acts as the Glycyl thioester intermediate in catalysis.

This sequence belongs to the ubiquitin-conjugating enzyme family.

It catalyses the reaction S-ubiquitinyl-[E1 ubiquitin-activating enzyme]-L-cysteine + [E2 ubiquitin-conjugating enzyme]-L-cysteine = [E1 ubiquitin-activating enzyme]-L-cysteine + S-ubiquitinyl-[E2 ubiquitin-conjugating enzyme]-L-cysteine.. It functions in the pathway protein modification; protein ubiquitination. Accepts the ubiquitin from the E1 complex and catalyzes its covalent attachment to other proteins. Involved in the formation of multiubiquitin chains. Signal the protein for selective degradation. The protein is Ubiquitin-conjugating enzyme E2 7 (UBC7) of Arabidopsis thaliana (Mouse-ear cress).